The chain runs to 1244 residues: ATP-dependent helicase/nuclease subunit A (1244 aa).

Residues 4–475 enclose the UvrD-like helicase ATP-binding domain; it reads KKWTAEQLAA…IGLSKNFRSR (472 aa). 25–32 is an ATP binding site; sequence AAAGAGKT. Residues 515-816 form the UvrD-like helicase C-terminal domain; sequence EDVKTATGPV…RIMSIHKSKG (302 aa). The interval 538–559 is disordered; sequence EQNTDSAEEKLTDGEEQEDLDS.

The protein belongs to the helicase family. AddA subfamily. In terms of assembly, heterodimer of AddA and AddB/RexB. Requires Mg(2+) as cofactor.

The enzyme catalyses Couples ATP hydrolysis with the unwinding of duplex DNA by translocating in the 3'-5' direction.. It carries out the reaction ATP + H2O = ADP + phosphate + H(+). Functionally, the heterodimer acts as both an ATP-dependent DNA helicase and an ATP-dependent, dual-direction single-stranded exonuclease. Recognizes the chi site generating a DNA molecule suitable for the initiation of homologous recombination. The AddA nuclease domain is required for chi fragment generation; this subunit has the helicase and 3' -&gt; 5' nuclease activities. The chain is ATP-dependent helicase/nuclease subunit A from Desulforamulus reducens (strain ATCC BAA-1160 / DSM 100696 / MI-1) (Desulfotomaculum reducens).